Reading from the N-terminus, the 145-residue chain is Putative pre-16S rRNA nuclease (145 aa).

It belongs to the YqgF nuclease family.

Its subcellular location is the cytoplasm. Could be a nuclease involved in processing of the 5'-end of pre-16S rRNA. The sequence is that of Putative pre-16S rRNA nuclease from Pseudomonas fluorescens (strain ATCC BAA-477 / NRRL B-23932 / Pf-5).